Here is a 251-residue protein sequence, read N- to C-terminus: Putative imidazole glycerol phosphate synthase subunit hisF2 (251 aa).

The active site involves aspartate 130.

It belongs to the HisA/HisF family. As to quaternary structure, heterodimer of HisH and HisF.

It localises to the cytoplasm. It catalyses the reaction 5-[(5-phospho-1-deoxy-D-ribulos-1-ylimino)methylamino]-1-(5-phospho-beta-D-ribosyl)imidazole-4-carboxamide + L-glutamine = D-erythro-1-(imidazol-4-yl)glycerol 3-phosphate + 5-amino-1-(5-phospho-beta-D-ribosyl)imidazole-4-carboxamide + L-glutamate + H(+). It functions in the pathway amino-acid biosynthesis; L-histidine biosynthesis; L-histidine from 5-phospho-alpha-D-ribose 1-diphosphate: step 5/9. Its function is as follows. IGPS catalyzes the conversion of PRFAR and glutamine to IGP, AICAR and glutamate. The HisF subunit catalyzes the cyclization activity that produces IGP and AICAR from PRFAR using the ammonia provided by the HisH subunit. In Pseudomonas aeruginosa (strain ATCC 15692 / DSM 22644 / CIP 104116 / JCM 14847 / LMG 12228 / 1C / PRS 101 / PAO1), this protein is Putative imidazole glycerol phosphate synthase subunit hisF2 (hisF2).